The chain runs to 548 residues: Probable malate:quinone oxidoreductase (548 aa).

Residues 521 to 548 form a disordered region; the sequence is DKPQAADSTPKPQLKPQPVQKEVADIAL. Low complexity predominate over residues 530–541; it reads PKPQLKPQPVQK.

Belongs to the MQO family. The cofactor is FAD.

It catalyses the reaction (S)-malate + a quinone = a quinol + oxaloacetate. It participates in carbohydrate metabolism; tricarboxylic acid cycle; oxaloacetate from (S)-malate (quinone route): step 1/1. This chain is Probable malate:quinone oxidoreductase, found in Escherichia coli (strain UTI89 / UPEC).